The sequence spans 428 residues: Light-independent protochlorophyllide reductase subunit N (428 aa).

[4Fe-4S] cluster contacts are provided by Cys-31, Cys-56, and Cys-117.

Belongs to the BchN/ChlN family. Protochlorophyllide reductase is composed of three subunits; BchL, BchN and BchB. Forms a heterotetramer of two BchB and two BchN subunits. The cofactor is [4Fe-4S] cluster.

It catalyses the reaction chlorophyllide a + oxidized 2[4Fe-4S]-[ferredoxin] + 2 ADP + 2 phosphate = protochlorophyllide a + reduced 2[4Fe-4S]-[ferredoxin] + 2 ATP + 2 H2O. Its pathway is porphyrin-containing compound metabolism; bacteriochlorophyll biosynthesis (light-independent). Component of the dark-operative protochlorophyllide reductase (DPOR) that uses Mg-ATP and reduced ferredoxin to reduce ring D of protochlorophyllide (Pchlide) to form chlorophyllide a (Chlide). This reaction is light-independent. The NB-protein (BchN-BchB) is the catalytic component of the complex. The sequence is that of Light-independent protochlorophyllide reductase subunit N from Rhodopseudomonas palustris (strain HaA2).